The following is a 64-amino-acid chain: Large ribosomal subunit protein bL35 (64 aa).

Residues 1–28 (MPKVKTKSGAKKRFKLTGSGKIKRKSAY) are disordered.

The protein belongs to the bacterial ribosomal protein bL35 family.

The protein is Large ribosomal subunit protein bL35 of Cytophaga hutchinsonii (strain ATCC 33406 / DSM 1761 / CIP 103989 / NBRC 15051 / NCIMB 9469 / D465).